A 286-amino-acid polypeptide reads, in one-letter code: 4-hydroxybenzoate octaprenyltransferase (286 aa).

7 helical membrane-spanning segments follow: residues Ile22–Met42, Leu45–Ile65, Leu98–Ile118, Phe143–Ala163, Ile213–Gln233, Tyr238–Leu255, and Asn266–Ile286.

Belongs to the UbiA prenyltransferase family. Mg(2+) is required as a cofactor.

It localises to the cell inner membrane. It catalyses the reaction all-trans-octaprenyl diphosphate + 4-hydroxybenzoate = 4-hydroxy-3-(all-trans-octaprenyl)benzoate + diphosphate. It participates in cofactor biosynthesis; ubiquinone biosynthesis. Catalyzes the prenylation of para-hydroxybenzoate (PHB) with an all-trans polyprenyl group. Mediates the second step in the final reaction sequence of ubiquinone-8 (UQ-8) biosynthesis, which is the condensation of the polyisoprenoid side chain with PHB, generating the first membrane-bound Q intermediate 3-octaprenyl-4-hydroxybenzoate. In Histophilus somni (strain 129Pt) (Haemophilus somnus), this protein is 4-hydroxybenzoate octaprenyltransferase.